A 441-amino-acid chain; its full sequence is Putative F-box protein At1g33530 (441 aa).

The 47-residue stretch at 91–137 folds into the F-box domain; sequence TTLAVELPDVLVEEILQRLPVKYLVRLKSISKGWKSLIESDHLAEKH.

This Arabidopsis thaliana (Mouse-ear cress) protein is Putative F-box protein At1g33530.